We begin with the raw amino-acid sequence, 376 residues long: DNA polymerase IV (376 aa).

The region spanning 6–187 is the UmuC domain; that stretch reads IIHIDMDAFF…LSIGKFYGVG (182 aa). D10 and D105 together coordinate Mg(2+). E106 is a catalytic residue.

It belongs to the DNA polymerase type-Y family. In terms of assembly, monomer. Mg(2+) serves as cofactor.

The protein localises to the cytoplasm. The catalysed reaction is DNA(n) + a 2'-deoxyribonucleoside 5'-triphosphate = DNA(n+1) + diphosphate. Functionally, poorly processive, error-prone DNA polymerase involved in untargeted mutagenesis. Copies undamaged DNA at stalled replication forks, which arise in vivo from mismatched or misaligned primer ends. These misaligned primers can be extended by PolIV. Exhibits no 3'-5' exonuclease (proofreading) activity. May be involved in translesional synthesis, in conjunction with the beta clamp from PolIII. This chain is DNA polymerase IV, found in Desulfotalea psychrophila (strain LSv54 / DSM 12343).